The following is a 127-amino-acid chain: uncharacterized protein (127 aa).

At threonine 30 the chain carries Phosphothreonine. The disordered stretch occupies residues 51-75 (APTYEQVLYPPASQKKTSNSTSEES). The residue at position 63 (serine 63) is a Phosphoserine.

This is an uncharacterized protein from Mus musculus (Mouse).